A 37-amino-acid polypeptide reads, in one-letter code: Large ribosomal subunit protein bL36 (37 aa).

This sequence belongs to the bacterial ribosomal protein bL36 family.

The polypeptide is Large ribosomal subunit protein bL36 (Alkaliphilus oremlandii (strain OhILAs) (Clostridium oremlandii (strain OhILAs))).